An 84-amino-acid polypeptide reads, in one-letter code: Small ribosomal subunit protein eS27 (84 aa).

Residues 38 to 60 (CPKCGATTTTFSHAHRQILCQKC) form a C4-type zinc finger.

It belongs to the eukaryotic ribosomal protein eS27 family. As to quaternary structure, component of the small ribosomal subunit. Zn(2+) is required as a cofactor.

Its subcellular location is the cytoplasm. Its function is as follows. Component of the small ribosomal subunit. The ribosome is a large ribonucleoprotein complex responsible for the synthesis of proteins in the cell. Required for proper rRNA processing and maturation of 18S rRNAs. The protein is Small ribosomal subunit protein eS27 (RPS27) of Entamoeba histolytica (strain ATCC 30459 / HM-1:IMSS / ABRM).